A 683-amino-acid chain; its full sequence is Synaptic vesicle glycoprotein 2B (683 aa).

Residues 1–10 (MDDYRYRDNY) are compositionally biased toward basic and acidic residues. Positions 1–72 (MDDYRYRDNY…QTKMAPSRAD (72 aa)) are disordered. Over 1–110 (MDDYRYRDNY…ECGHGRFQWT (110 aa)) the chain is Cytoplasmic. Residue S33 is modified to Phosphoserine. At T36 the chain carries Phosphothreonine. The helical transmembrane segment at 111-131 (LFFVLVLALMADGVEVFVVSF) threads the bilayer. Residues 132 to 148 (ALPSAEKDMCLSSSKKG) lie on the Extracellular side of the membrane. The helical transmembrane segment at 149-169 (MLGLIVYLGMMAGAFILGGLA) threads the bilayer. Residues 170–182 (DKLGRKKVLSMSL) lie on the Cytoplasmic side of the membrane. The chain crosses the membrane as a helical span at residues 183-203 (AINASFASLSSFVQGYGAFLF). At 204 to 205 (CR) the chain is on the extracellular side. A helical membrane pass occupies residues 206–226 (LISGIGIGGSLPIVFAYFSEF). Over 227–237 (LSREKRGEHLS) the chain is Cytoplasmic. The helical transmembrane segment at 238–258 (WLGIFWMTGGIYASAMAWSII) threads the bilayer. Topologically, residues 259-277 (PHYGWGFSMGTNYHFHSWR) are extracellular. Residues 278–298 (VFVIVCALPATVSMVALKFMP) form a helical membrane-spanning segment. Residues 299-390 (ESPRFLLEMG…CVMGPYRMNT (92 aa)) lie on the Cytoplasmic side of the membrane. The helical transmembrane segment at 391–411 (LILAVVWFTMALSYYGLTVWF) threads the bilayer. The Extracellular portion of the chain corresponds to 412–535 (PDMIRYFQDE…CHMDFEEDND (124 aa)). Y423 bears the Phosphotyrosine mark. N-linked (GlcNAc...) asparagine glycosylation is found at N441, N491, and N516. A helical transmembrane segment spans residues 536 to 556 (FLIYLVSFLGSLSVLPGNIIS). The Cytoplasmic segment spans residues 557–565 (ALLMDRIGR). The chain crosses the membrane as a helical span at residues 566 to 586 (LKMIGGSMLISAVCCFFLFFG). Over 587 to 592 (NSESAM) the chain is Extracellular. The helical transmembrane segment at 593–613 (IGWQCLFCGTSIAAWNALDVI) threads the bilayer. Residues 614–626 (TVELYPTNQRATA) lie on the Cytoplasmic side of the membrane. Residues 627–649 (FGILNGLCKLGAILGNTIFASFV) traverse the membrane as a helical segment. Residues 650–653 (GITK) lie on the Extracellular side of the membrane. Residues 654-672 (VVPILLAAASLVGGGLVAL) traverse the membrane as a helical segment. At 673 to 683 (RLPETREQVLM) the chain is on the cytoplasmic side.

This sequence belongs to the major facilitator superfamily. Interacts with SYT1 in a calcium-independent manner. Forms a complex with SYT1, syntaxin-1 and SNAP25. As to quaternary structure, (Microbial infection) Interacts with C.botulinum neurotoxin type A1 and type A2 (BoNT/A, botA). Interaction is improved by glycosylation of SV2. In terms of assembly, (Microbial infection) Interacts with C.botulinum neurotoxin type D (BoNT/D, botD). (Microbial infection) Interacts with C.botulinum neurotoxin type E (BoNT/E). Interaction requires glycosylation of SV2 proteins. As to quaternary structure, (Microbial infection) Interacts with C.botulinum neurotoxin type F (BoNT/F). Interaction requires glycosylation of SV2 proteins. N-glycosylated. Post-translationally, the N-terminal cytoplasmic domain is phosphorylated by CK1. As to expression, widely expressed throughout the brain. Specifically expressed by pinealocytes in the pineal gland. Also detected in testis (at protein level). Specifically expressed in neural tissues. Expressed in the spinal cord and in all brain regions with a stronger expression in hippocampus and cortex.

Its subcellular location is the cytoplasmic vesicle. The protein resides in the secretory vesicle. The protein localises to the synaptic vesicle membrane. It localises to the acrosome. In terms of biological role, probably plays a role in the control of regulated secretion in neural and endocrine cells. Its function is as follows. (Microbial infection) Receptor for C.botulinum neurotoxin type A (BoNT/A, botA); the toxin binds via extracellular loop 4. Restores uptake of BoNT/A in mouse and rat cells that are deleted for SV2 receptor. Glycosylation of SV2B is not essential for receptor activity, but enhances the interaction. Also serves as a receptor for the closely related C.botulinum neurotoxin type A2; glycosylation is not essential but enhances the interaction. (Microbial infection) Possible receptor for C.botulinum neurotoxin type D (BoNT/D, botD); BoNT/D does not bind to extracellular loop 4 as do BoNT/A and BoNT/E. Another group does not find a convincing interaction with SV2. Functionally, (Microbial infection) Receptor for C.botulinum neurotoxin type E (BoNT/E); the toxin probably binds via extracellular loop 4. Restores uptake of BoNT/E in mouse cells that are deleted for SV2 receptor. Glycosylation of SV2B is not essential for receptor activity, but enhances the interaction. In terms of biological role, (Microbial infection) Receptor for C.botulinum neurotoxin type F (BoNT/F); binding requires glycosylation of this protein. The sequence is that of Synaptic vesicle glycoprotein 2B (Sv2b) from Rattus norvegicus (Rat).